We begin with the raw amino-acid sequence, 150 residues long: Transcriptional regulator MraZ (150 aa).

SpoVT-AbrB domains are found at residues 6–52 (EFFN…PYQE) and 80–126 (AVEC…NRTK).

Belongs to the MraZ family. As to quaternary structure, forms oligomers.

It is found in the cytoplasm. Its subcellular location is the nucleoid. This chain is Transcriptional regulator MraZ, found in Syntrophotalea carbinolica (strain DSM 2380 / NBRC 103641 / GraBd1) (Pelobacter carbinolicus).